Reading from the N-terminus, the 505-residue chain is Alpha-internexin (505 aa).

The head stretch occupies residues 1-87 (MSFGSEHYLC…SQAAARTNEY (87 aa)). Residue S72 is modified to Phosphoserine. Residues 88-129 (KIIRTNEKEQLQGLNDRFAVFIEKVHQLETQNRALEAELAAL) are coil 1A. Residues 94-407 (EKEQLQGLND…KLLEGEETRF (314 aa)) form the IF rod domain. The tract at residues 130–142 (RQRHAEPSRVGEL) is linker 1. The coil 1B stretch occupies residues 143–238 (FQRELRELRA…QVHDEEVAEL (96 aa)). Position 219 is a phosphoserine (S219). Positions 239-262 (LATLQASSQAAAEVDVAVAKPDLT) are linker 2. Residues 263–408 (SALREIRAQY…LLEGEETRFS (146 aa)) form a coil 2 region. K290 carries the post-translational modification N6-acetyllysine. A phosphoserine mark is found at S335, S474, and S502. The interval 409-505 (TSGLSISGLN…EITTSSSQKM (97 aa)) is tail. The segment at 438–505 (KVSSAGLSLK…EITTSSSQKM (68 aa)) is disordered. The span at 495–505 (EEITTSSSQKM) shows a compositional bias: low complexity.

This sequence belongs to the intermediate filament family. As to quaternary structure, forms homodimers (in vitro). Forms heterodimers with NEFL, NEFM or NEFH (in vitro). O-glycosylated. In terms of tissue distribution, expressed in the dorsal root ganglion neurons (at protein level).

Functionally, class-IV neuronal intermediate filament that is able to self-assemble. It is involved in the morphogenesis of neurons. It may form an independent structural network without the involvement of other neurofilaments or it may cooperate with NEFL to form the filamentous backbone to which NEFM and NEFH attach to form the cross-bridges. May also cooperate with the neuronal intermediate filament protein PRPH to form filamentous networks. The sequence is that of Alpha-internexin (Ina) from Rattus norvegicus (Rat).